The sequence spans 340 residues: UDP-3-O-acylglucosamine N-acyltransferase (340 aa).

Catalysis depends on H238, which acts as the Proton acceptor.

This sequence belongs to the transferase hexapeptide repeat family. LpxD subfamily. As to quaternary structure, homotrimer.

The enzyme catalyses a UDP-3-O-[(3R)-3-hydroxyacyl]-alpha-D-glucosamine + a (3R)-hydroxyacyl-[ACP] = a UDP-2-N,3-O-bis[(3R)-3-hydroxyacyl]-alpha-D-glucosamine + holo-[ACP] + H(+). It participates in bacterial outer membrane biogenesis; LPS lipid A biosynthesis. Functionally, catalyzes the N-acylation of UDP-3-O-acylglucosamine using 3-hydroxyacyl-ACP as the acyl donor. Is involved in the biosynthesis of lipid A, a phosphorylated glycolipid that anchors the lipopolysaccharide to the outer membrane of the cell. In Shewanella frigidimarina (strain NCIMB 400), this protein is UDP-3-O-acylglucosamine N-acyltransferase.